Here is a 503-residue protein sequence, read N- to C-terminus: uncharacterized protein (503 aa).

12 helical membrane passes run 20–40 (FIAFAFNYVAGFGFISVVLTM), 43–63 (LGPFSYLILGLAALGILGVML), 106–126 (VSLTGPFNGLIVPAVLVLSFA), 138–158 (LIGLLVGGFVLFGALNFISLF), 166–186 (AILFFAIVKWVVVLGGLILGI), 215–235 (VISTTVGMLVAFAGTEDLTAI), 249–269 (LLMFGAVTLLYLIGFVIISGI), 301–321 (YLGIPLLVIFGLGFLLNSLAS), 359–379 (VWASNIMTLAVMVLMIIVPFL), 405–425 (LAVLISLIQYFITYIFFFMIL), 443–463 (GVSFAIITVLLFVNLFPITAW), and 468–488 (TFKLSILAAFFALGIGFFIHS).

To M.genitalium MG225.

Its subcellular location is the cell membrane. This is an uncharacterized protein from Mycoplasma pneumoniae (strain ATCC 29342 / M129 / Subtype 1) (Mycoplasmoides pneumoniae).